A 521-amino-acid polypeptide reads, in one-letter code: Occludin (521 aa).

The segment at 1–20 (MSVRPFESPPPYRPDEFKPN) is disordered. Topologically, residues 1-66 (MSVRPFESPP…KWTSPPGVIR (66 aa)) are cytoplasmic. Positions 60 to 267 (SPPGVIRILS…IIFFAVKTRR (208 aa)) constitute an MARVEL domain. The helical transmembrane segment at 67–89 (ILSMLIIVMCIAIFACVASTLAW) threads the bilayer. Over 90 to 133 (DRGYGTGLFGGSLNYPYSGFGYGGGYGGGYGGYGYGYGGYTDPR) the chain is Extracellular. The chain crosses the membrane as a helical span at residues 134–158 (AAKGFLLAMAAFCFIASLVIFVTSV). Residues 159 to 168 (IRSGMSRTRR) lie on the Cytoplasmic side of the membrane. Residues 169–193 (YYLIVIIVSAILGIMVFIATIVYIM) form a helical membrane-spanning segment. Residues 194-241 (GVNPTAQASGSMYGSQIYMICNQFYTPGGTGLYVDQYLYHYCVVDPQE) are Extracellular-facing. Cys-214 and Cys-235 are disulfide-bonded. The helical transmembrane segment at 242-263 (AIAIVLGFMIIVAFALIIFFAV) threads the bilayer. Over 264-521 (KTRRKMDRYD…MVGDYDRRKP (258 aa)) the chain is Cytoplasmic. The residue at position 300 (Ser-300) is a Phosphoserine. A disordered region spans residues 300-329 (SAGTQDMPPPPSDYAERVDSPMAYSSNGKV). At Thr-303 the chain carries Phosphothreonine. 2 positions are modified to phosphoserine: Ser-311 and Ser-319. Ser-338 carries the post-translational modification Phosphoserine; by PKC; in vitro. Ser-358 carries the phosphoserine modification. Positions 361–405 (DFRQPRYSSNGNLETPSKRAPTKGKAGKGKRTDPDHYETDYTTGG) are disordered. A compositionally biased stretch (polar residues) spans 366 to 375 (RYSSNGNLET). Residue Tyr-367 is modified to Phosphotyrosine. Residues Ser-368 and Ser-369 each carry the phosphoserine modification. Basic residues predominate over residues 380–389 (APTKGKAGKG). Residues 390-399 (KRTDPDHYET) show a composition bias toward basic and acidic residues. Tyr-397 and Tyr-401 each carry phosphotyrosine. Thr-402 is subject to Phosphothreonine; by PKC/PRKCH. Thr-403 is subject to Phosphothreonine. Ser-407 bears the Phosphoserine mark. The OCEL domain maps to 413-521 (EDWVREYPPI…MVGDYDRRKP (109 aa)). Positions 424–488 (SDQQRQLYKR…EYNRLKQVKG (65 aa)) form a coiled coil. Ser-489 carries the post-translational modification Phosphoserine.

This sequence belongs to the ELL/occludin family. In terms of assembly, interacts with TJP1/ZO1. Interacts with VAPA. Interacts with CLDN1, CLDN6, CLDN9, CLDN11, CLDN12 and CLDN17. Interacts with PLSCR1. Interacts with LSR, ILDR1 and ILDR2. Interacts with TJP2/ZO2. Dephosphorylated by PTPRJ. May be phosphorylated by PKC during translocation to cell-cell contacts. In terms of tissue distribution, localized at tight junctions of both epithelial and endothelial cells. Highly expressed in the testis, kidney, lung, liver and brain. Not detected in skeletal muscle, spleen and heart.

It is found in the cell membrane. The protein resides in the cell junction. The protein localises to the tight junction. In terms of biological role, may play a role in the formation and regulation of the tight junction (TJ) paracellular permeability barrier. In Mus musculus (Mouse), this protein is Occludin (Ocln).